We begin with the raw amino-acid sequence, 641 residues long: Bilirubin reductase (641 aa).

Q96 is a binding site for FMN. R167 serves as the catalytic Proton donor. FMN-binding positions include K214, R295, and 317-318 (GR). 4 residues coordinate [4Fe-4S] cluster: C341, C344, C348, and C360. FAD contacts are provided by A391, E410, Q418, K428, and A455.

This sequence in the N-terminal section; belongs to the NADH:flavin oxidoreductase/NADH oxidase family. FAD serves as cofactor. The cofactor is FMN. Requires [4Fe-4S] cluster as cofactor.

The enzyme catalyses urobilinogen + 4 A = (4Z,15Z)-bilirubin IXalpha + 4 AH2. It catalyses the reaction urobilinogen + 2 A = (4Z,15Z)-mesobilirubin IXalpha + 2 AH2. Its pathway is porphyrin-containing compound metabolism; protoheme degradation. Its function is as follows. Bilirubin reductase that catalyzes reduction of mesobilirubin and/or bilirubin to urobilinogen, a key step during heme degradation. Urobilinogen then spontaneously degrades into urobilin, which gives urine its distinctive yellow color. The sequence is that of Bilirubin reductase from Mediterraneibacter gnavus (strain CC55_001C).